The following is an 818-amino-acid chain: Probable helicase MAGATAMA 3 (818 aa).

In terms of domain architecture, UvrD-like helicase ATP-binding spans 259-559; that stretch reads NKSQKEAIDV…KMLKTQYRMH (301 aa). 280–287 serves as a coordination point for ATP; the sequence is GPPGTGKT. Composition is skewed to acidic residues over residues 781 to 790 and 798 to 818; these read PDAPLYEDES and GDDD…AGED. Residues 781–818 form a disordered region; sequence PDAPLYEDESLPVAPYGGDDDFGDGDADQDDVAMAGED.

This sequence belongs to the helicase family. As to expression, expressed in flowers, siliques, leaves, roots and shoot apex.

The protein resides in the nucleus. Functionally, probable helicase that may regulate RNA molecules involved in nucleolar organization and pollen tube guidance. This Arabidopsis thaliana (Mouse-ear cress) protein is Probable helicase MAGATAMA 3 (MAA3).